The chain runs to 1056 residues: Ribosomal protein S6 kinase delta-1 (1056 aa).

The region spanning 8 to 132 is the PX domain; it reads SADLARFYTV…DFFKGGVISD (125 aa). The interval 204-223 is disordered; the sequence is VGAVASDSEPSRVEDRESRS. Positions 212-222 are enriched in basic and acidic residues; it reads EPSRVEDRESR. The MIT domain maps to 276–304; the sequence is VQGESSPTRREAVKRRTAEYLMRAESICS. A phosphoserine mark is found at S281, S422, S423, S426, S446, S448, and S454. One can recognise a Protein kinase 1 domain in the interval 343-444; that stretch reads GVIDKVLLVM…SMPPRVCLQQ (102 aa). The disordered stretch occupies residues 426-504; sequence SLDIKEGRPS…KWLDSGSSSE (79 aa). Over residues 443-454 the composition is skewed to low complexity; the sequence is QQPSASPQGGSS. Positions 473 to 482 are enriched in polar residues; sequence TSLTPSSQDD. A phosphoserine mark is found at S493 and S527. Positions 529–588 are disordered; sequence SEESVMQPEGDKADTQAVSSPASLATGSVSPSTHLRVFSGGEDLEAVSSPPTSESLSRSK. The span at 544 to 561 shows a compositional bias: polar residues; sequence QAVSSPASLATGSVSPST. Positions 576-587 are enriched in low complexity; it reads SSPPTSESLSRS. S577, S599, S602, S634, S655, S658, S661, and S787 each carry phosphoserine. The tract at residues 628 to 662 is disordered; the sequence is TLEDGDSPSQSLDPGESKRESEAQDSVSRGSDDSV. Residues 789–1046 form the Protein kinase 2 domain; the sequence is RSESDRLGQV…VEDIKSHPFF (258 aa). ATP contacts are provided by residues 795-803 and K823; that span reads LGQVEVVVT. The active-site Proton acceptor is D919.

Belongs to the protein kinase superfamily. Ser/Thr protein kinase family. S6 kinase subfamily. In terms of assembly, interacts with SPHK1 and phosphatidylinositol 3-phosphate. Interacts (via PX domain) with PRDX3.

The protein resides in the cytoplasm. It localises to the membrane. The protein localises to the early endosome. The enzyme catalyses L-seryl-[protein] + ATP = O-phospho-L-seryl-[protein] + ADP + H(+). It catalyses the reaction L-threonyl-[protein] + ATP = O-phospho-L-threonyl-[protein] + ADP + H(+). Functionally, may be involved in transmitting sphingosine-1 phosphate (SPP)-mediated signaling into the cell. Plays a role in the recruitment of PRDX3 to early endosomes. This is Ribosomal protein S6 kinase delta-1 (Rps6kc1) from Mus musculus (Mouse).